The primary structure comprises 199 residues: Sulfocyanin (199 aa).

Residues 7-27 (VLPVVVGILVVIIAVAVGVYV) form a helical; Signal-anchor for type II membrane protein membrane-spanning segment. Residues 79 to 188 (NFNGTSSGSL…SGMWAVLVAS (110 aa)) form the Plastocyanin-like domain. Cu cation-binding residues include His-110, Cys-171, His-176, and Met-181.

Belongs to the multicopper oxidase family.

The protein resides in the cell membrane. Functionally, the 4 redox proteins SoxE, SoxF, SoxG and SoxH probably form part of a membrane respiratory complex together with SoxM, a catalytic subunit of cytochrome oxidase. The chain is Sulfocyanin (soxE) from Sulfolobus acidocaldarius (strain ATCC 33909 / DSM 639 / JCM 8929 / NBRC 15157 / NCIMB 11770).